The following is a 342-amino-acid chain: Ferrochelatase (342 aa).

Fe cation is bound by residues His188 and Glu268.

The protein belongs to the ferrochelatase family.

The protein localises to the cytoplasm. The catalysed reaction is heme b + 2 H(+) = protoporphyrin IX + Fe(2+). The protein operates within porphyrin-containing compound metabolism; protoheme biosynthesis; protoheme from protoporphyrin-IX: step 1/1. In terms of biological role, catalyzes the ferrous insertion into protoporphyrin IX. The polypeptide is Ferrochelatase (Rickettsia prowazekii (strain Madrid E)).